The sequence spans 219 residues: Probable GTP-binding protein EngB (219 aa).

The EngB-type G domain occupies 42-219 (SVPEIAFAGR…RTAVLEAVEL (178 aa)). GTP contacts are provided by residues 50–57 (GRSNVGKS), 77–81 (GRTQE), 97–100 (DMPG), 164–167 (TKAD), and 198–200 (TSS). Mg(2+) is bound by residues serine 57 and threonine 79.

This sequence belongs to the TRAFAC class TrmE-Era-EngA-EngB-Septin-like GTPase superfamily. EngB GTPase family. The cofactor is Mg(2+).

In terms of biological role, necessary for normal cell division and for the maintenance of normal septation. This Sphingopyxis alaskensis (strain DSM 13593 / LMG 18877 / RB2256) (Sphingomonas alaskensis) protein is Probable GTP-binding protein EngB.